Consider the following 174-residue polypeptide: Type II secretion system protein M (174 aa).

The Cytoplasmic portion of the chain corresponds to 1 to 32 (MKVMTQFHERLRAQAETSQLAIRWRGLPARDR). A helical membrane pass occupies residues 33 to 52 (LALLWLGAFLLLVVLYLALW). The Periplasmic segment spans residues 53–174 (RPAERHLQSA…VSARLSLRVE (122 aa)).

The protein belongs to the GSP M family. Type II secretion system is composed of four main components: the outer membrane complex, the inner membrane complex, the cytoplasmic secretion ATPase and the periplasm-spanning pseudopilus. Forms homodimers. Interacts with XcpY/GspL. Interacts with XcpR/GspE and XcpS/GspF.

The protein resides in the cell inner membrane. Inner membrane component of the type II secretion system required for the energy-dependent secretion of extracellular factors such as proteases and toxins from the periplasm. Plays a role in the complex assembly and recruits XcpY resulting in a stable complex in the inner membrane. Provides thus a link between the energy-providing XcpR protein in the cytoplasm and the rest of the T2SS machinery. In Pseudomonas aeruginosa (strain ATCC 15692 / DSM 22644 / CIP 104116 / JCM 14847 / LMG 12228 / 1C / PRS 101 / PAO1), this protein is Type II secretion system protein M (xcpZ).